Reading from the N-terminus, the 283-residue chain is MINIPNSIRPFIRSANRTPCYLRSISSSSSSSFATPAEEHAGKQPSSAVPVKEFSIYRWNPDEPSKKPTLQTYSIDLKKCGPMVLDALIKIKNELDPTLTFRRSCREGICGSCAMNIDGVNTLACLKRINKETSAPVKIYPLPHMYIIKDLVPDMTHFYKQYKSIEPFLKNDNPPAQGEFLQSPEDRKKLDGMYECILCACCSTSCPSYWWNQDEYLGPAVLMQAYRWMADSRDSYGEDRKEKLQNTLSLYRCHTIFNCTKTCPKGLNPAKAISHIKREMASA.

Positions 66–145 (KKPTLQTYSI…PVKIYPLPHM (80 aa)) constitute a 2Fe-2S ferredoxin-type domain. Residues cysteine 105, cysteine 110, cysteine 113, and cysteine 125 each coordinate [2Fe-2S] cluster. Residues 186-216 (DRKKLDGMYECILCACCSTSCPSYWWNQDEY) form the 4Fe-4S ferredoxin-type domain. [4Fe-4S] cluster contacts are provided by cysteine 196, cysteine 199, and cysteine 202. Position 206 (cysteine 206) interacts with [3Fe-4S] cluster. A ubiquinone is bound at residue tryptophan 211. Positions 253 and 259 each coordinate [3Fe-4S] cluster. [4Fe-4S] cluster is bound at residue cysteine 263.

Belongs to the succinate dehydrogenase/fumarate reductase iron-sulfur protein family. As to quaternary structure, component of complex II composed of four subunits: a flavoprotein (FP), an iron-sulfur protein (IP), and a cytochrome b composed of a large and a small subunit. [2Fe-2S] cluster serves as cofactor. Requires [3Fe-4S] cluster as cofactor. [4Fe-4S] cluster is required as a cofactor.

Its subcellular location is the mitochondrion inner membrane. It carries out the reaction a quinone + succinate = fumarate + a quinol. The protein operates within carbohydrate metabolism; tricarboxylic acid cycle; fumarate from succinate (eukaryal route): step 1/1. Iron-sulfur protein (IP) subunit of succinate dehydrogenase (SDH) that is involved in complex II of the mitochondrial electron transport chain and is responsible for transferring electrons from succinate to ubiquinone (coenzyme Q). The protein is Succinate dehydrogenase [ubiquinone] iron-sulfur subunit, mitochondrial (SDH2) of Uromyces fabae (Rust fungus).